Consider the following 481-residue polypeptide: UDP-N-acetylmuramoylalanine--D-glutamate ligase (481 aa).

108–114 (GTNGKTS) provides a ligand contact to ATP.

The protein belongs to the MurCDEF family.

The protein localises to the cytoplasm. The enzyme catalyses UDP-N-acetyl-alpha-D-muramoyl-L-alanine + D-glutamate + ATP = UDP-N-acetyl-alpha-D-muramoyl-L-alanyl-D-glutamate + ADP + phosphate + H(+). It participates in cell wall biogenesis; peptidoglycan biosynthesis. Cell wall formation. Catalyzes the addition of glutamate to the nucleotide precursor UDP-N-acetylmuramoyl-L-alanine (UMA). This chain is UDP-N-acetylmuramoylalanine--D-glutamate ligase, found in Bifidobacterium longum subsp. infantis (strain ATCC 15697 / DSM 20088 / JCM 1222 / NCTC 11817 / S12).